The primary structure comprises 388 residues: Deoxyuridine 5'-triphosphate nucleotidohydrolase (388 aa).

The span at 77–88 shows a compositional bias: basic and acidic residues; sequence EEKYDKEQHPGE. 2 disordered regions span residues 77-96 and 336-388; these read EEKY…SPLP and THTP…PRHP. Acidic residues predominate over residues 351–363; that stretch reads VDDDVDETEEDEK.

The protein belongs to the dUTPase family. Requires Mg(2+) as cofactor.

It is found in the virion. The catalysed reaction is dUTP + H2O = dUMP + diphosphate + H(+). It functions in the pathway pyrimidine metabolism; dUMP biosynthesis; dUMP from dCTP (dUTP route): step 2/2. Functionally, involved in nucleotide metabolism: produces dUMP, the immediate precursor of thymidine nucleotides and decreases the intracellular concentration of dUTP to avoid uracil incorporation into viral DNA. In Human cytomegalovirus (strain AD169) (HHV-5), this protein is Deoxyuridine 5'-triphosphate nucleotidohydrolase.